Here is a 161-residue protein sequence, read N- to C-terminus: UPF0225 protein GSU1048 (161 aa).

The protein belongs to the UPF0225 family.

In Geobacter sulfurreducens (strain ATCC 51573 / DSM 12127 / PCA), this protein is UPF0225 protein GSU1048.